A 331-amino-acid chain; its full sequence is Ketol-acid reductoisomerase (NADP(+)) (331 aa).

One can recognise a KARI N-terminal Rossmann domain in the interval 2–182; it reads ARMYYDEDAN…GGTRGGVLET (181 aa). NADP(+)-binding positions include 25–28, Ser-51, Ser-53, and 83–86; these read YGSQ and DEVQ. The active site involves His-108. Gly-134 serves as a coordination point for NADP(+). One can recognise a KARI C-terminal knotted domain in the interval 183-328; sequence TFREETETDL…KDLRAMFSWL (146 aa). Mg(2+)-binding residues include Asp-191, Glu-195, Glu-227, and Glu-231. Ser-252 is a binding site for substrate.

It belongs to the ketol-acid reductoisomerase family. Requires Mg(2+) as cofactor.

The enzyme catalyses (2R)-2,3-dihydroxy-3-methylbutanoate + NADP(+) = (2S)-2-acetolactate + NADPH + H(+). It carries out the reaction (2R,3R)-2,3-dihydroxy-3-methylpentanoate + NADP(+) = (S)-2-ethyl-2-hydroxy-3-oxobutanoate + NADPH + H(+). The protein operates within amino-acid biosynthesis; L-isoleucine biosynthesis; L-isoleucine from 2-oxobutanoate: step 2/4. Its pathway is amino-acid biosynthesis; L-valine biosynthesis; L-valine from pyruvate: step 2/4. In terms of biological role, involved in the biosynthesis of branched-chain amino acids (BCAA). Catalyzes an alkyl-migration followed by a ketol-acid reduction of (S)-2-acetolactate (S2AL) to yield (R)-2,3-dihydroxy-isovalerate. In the isomerase reaction, S2AL is rearranged via a Mg-dependent methyl migration to produce 3-hydroxy-3-methyl-2-ketobutyrate (HMKB). In the reductase reaction, this 2-ketoacid undergoes a metal-dependent reduction by NADPH to yield (R)-2,3-dihydroxy-isovalerate. The sequence is that of Ketol-acid reductoisomerase (NADP(+)) from Trichormus variabilis (strain ATCC 29413 / PCC 7937) (Anabaena variabilis).